We begin with the raw amino-acid sequence, 158 residues long: MARGVNKVILIGNLGQDPEVRYTPNGNAVANVTLATSTTWRDKQTGELQERTEWHRIAFFNRLAEIVGEYLRKGSKIYIEGSLRTRKWQDKNGVDRYTTEIIANEMHMLDNRGGGNSGNYGNHSEGGASNKQSAPTSSQTPTAGDDSSVADFDDDIPF.

The SSB domain occupies 5-110 (VNKVILIGNL…IIANEMHMLD (106 aa)). The segment at 109–158 (LDNRGGGNSGNYGNHSEGGASNKQSAPTSSQTPTAGDDSSVADFDDDIPF) is disordered. Positions 129–142 (SNKQSAPTSSQTPT) are enriched in polar residues. An Important for interaction with partner proteins motif is present at residues 153-158 (DDDIPF).

Homotetramer.

Plays an important role in DNA replication, recombination and repair. Binds to ssDNA and to an array of partner proteins to recruit them to their sites of action during DNA metabolism. The protein is Single-stranded DNA-binding protein (ssb) of Coxiella burnetii (strain RSA 493 / Nine Mile phase I).